A 219-amino-acid chain; its full sequence is Thymidylate kinase (219 aa).

7–14 (GIDGAGKS) contributes to the ATP binding site.

The protein belongs to the thymidylate kinase family.

It catalyses the reaction dTMP + ATP = dTDP + ADP. Functionally, phosphorylation of dTMP to form dTDP in both de novo and salvage pathways of dTTP synthesis. This is Thymidylate kinase from Chlorobium phaeobacteroides (strain DSM 266 / SMG 266 / 2430).